The sequence spans 60 residues: Small ribosomal subunit protein uS10 (60 aa).

Belongs to the universal ribosomal protein uS10 family.

The protein is Small ribosomal subunit protein uS10 (RPS20) of Zea mays (Maize).